A 962-amino-acid chain; its full sequence is Glycine dehydrogenase (decarboxylating) (962 aa).

Lys-710 is modified (N6-(pyridoxal phosphate)lysine).

It belongs to the GcvP family. The glycine cleavage system is composed of four proteins: P, T, L and H. The cofactor is pyridoxal 5'-phosphate.

It carries out the reaction N(6)-[(R)-lipoyl]-L-lysyl-[glycine-cleavage complex H protein] + glycine + H(+) = N(6)-[(R)-S(8)-aminomethyldihydrolipoyl]-L-lysyl-[glycine-cleavage complex H protein] + CO2. The glycine cleavage system catalyzes the degradation of glycine. The P protein binds the alpha-amino group of glycine through its pyridoxal phosphate cofactor; CO(2) is released and the remaining methylamine moiety is then transferred to the lipoamide cofactor of the H protein. This chain is Glycine dehydrogenase (decarboxylating), found in Idiomarina loihiensis (strain ATCC BAA-735 / DSM 15497 / L2-TR).